We begin with the raw amino-acid sequence, 270 residues long: Energy-coupling factor transporter transmembrane protein EcfT (270 aa).

Transmembrane regions (helical) follow at residues 36–56 (LFIVNSFKGYIFIVVFTLISI), 72–92 (PIFILVLITAVLNIFMTGGAN), 108–128 (LIMAAFMALRLVFLIIGTSLL), and 248–268 (FIASLCALVLVCISILSRIWW).

Belongs to the energy-coupling factor EcfT family. Forms a stable energy-coupling factor (ECF) transporter complex composed of 2 membrane-embedded substrate-binding proteins (S component), 2 ATP-binding proteins (A component) and 2 transmembrane proteins (T component). May be able to interact with more than 1 S component at a time.

Its subcellular location is the cell membrane. Its function is as follows. Transmembrane (T) component of an energy-coupling factor (ECF) ABC-transporter complex. Unlike classic ABC transporters this ECF transporter provides the energy necessary to transport a number of different substrates. The sequence is that of Energy-coupling factor transporter transmembrane protein EcfT from Clostridium kluyveri (strain ATCC 8527 / DSM 555 / NBRC 12016 / NCIMB 10680 / K1).